A 143-amino-acid polypeptide reads, in one-letter code: Hexaprenyl-diphosphate synthase small subunit ((2E,6E)-farnesyl-diphosphate specific) (143 aa).

In terms of assembly, dimer of heterodimer or heterotetramer composed of a small (Hexs-a) and large (Hexs-B) subunit.

The catalysed reaction is 3 isopentenyl diphosphate + (2E,6E)-farnesyl diphosphate = all-trans-hexaprenyl diphosphate + 3 diphosphate. Catalyzes the condensation of three molecules of isopentenyl diphosphate with farnesyl diphosphate (FPP) to yield (all-E)-hexaprenyl diphosphate (HexPP; C30), the precursor of the prenyl side chain of menaquinone-6. Large subunit Hexs-B catalyzes the condensation reaction and the final product chain length is cooperatively regulated by both the Hexs-A and Hexs-B subunits using the whole size of the hydrophobic cleft as a ruler. The chain is Hexaprenyl-diphosphate synthase small subunit ((2E,6E)-farnesyl-diphosphate specific) (hexs-a) from Micrococcus luteus (Micrococcus lysodeikticus).